The primary structure comprises 102 residues: Small ribosomal subunit protein uS10 (102 aa).

It belongs to the universal ribosomal protein uS10 family. Part of the 30S ribosomal subunit.

In terms of biological role, involved in the binding of tRNA to the ribosomes. This is Small ribosomal subunit protein uS10 from Lactococcus lactis subsp. lactis (strain IL1403) (Streptococcus lactis).